An 827-amino-acid chain; its full sequence is MRQRLLFLTTLVPFVLAPRPPEEPGSGSHLRLEKLDSLLSDYDILSLSNIQQHSIRKRDLQSATHLETLLTFSALKRHFKLYLTSSTERFSQNLRVVVVDGKEESEYSVKWQDFFSGHVVGEPDSRVLAHIGDDDVTVRINTDGAEYNIEPLWRFVNDTKDKRMLVYKSEDIKDFSRLQSPKVCGYLNADSEELLPKGLIDREPSEEFVRRVKRRAEPNPLKNTCKLLVVADHRFYKYMGRGEESTTTNYLIELIDRVDDIYRNTSWDNAGFKGYGVQIEQIRILKSPQEVKPGERHFNMAKSFPNEEKDAWDVKMLLEQFSLDIAEEASKVCLAHLFTYQDFDMGTLGLAYVGSPRANSHGGVCPKAYYNPGVKKNIYLNSGLTSTKNYGKTILTKEADLVTTHELGHNFGAEHDPDGLAECAPNEDQGGKYVMYPIAVSGDHENNKMFSNCSKQSIYKTIESKAQECFQERSNKVCGNSRVDEGEECDPGIMYLNNDTCCNSDCTLKPGVQCSDRNSPCCKNCQFETAQKKCQEAINATCKGVSYCTGNSSECPPPGDAEDDTVCLDLGKCKAGKCIPFCKREQELESCACADTDNSCKVCCRNLSGPCVPYVDAEQKNLFLRKGKPCTVGFCDMNGKCEKRVQDVIERFWDFIDQLSINTFGKFLADNIVGSVLVFSLIFWIPFSILVHCVDKKLDKQYESLSLFHHSNIEMLSSMDSASVRIIKPFPAPQTPGRLQALQPAAMMPPVSAAPKLDHQRMDTIQEDPSTDSHVDDDGFEKDPFPNSSAAAKSFEDLTDHPVTRSEKAASFKLQRQSRVDSKETEC.

The first 17 residues, 1-17 (MRQRLLFLTTLVPFVLA), serve as a signal peptide directing secretion. The propeptide occupies 18 to 214 (PRPPEEPGSG…SEEFVRRVKR (197 aa)). A glycan (N-linked (GlcNAc...) asparagine) is linked at asparagine 157. Residues 182–189 (KVCGYLNA) carry the Cysteine switch motif. A Zn(2+)-binding site is contributed by cysteine 184. Residues 215–671 (RAEPNPLKNT…NTFGKFLADN (457 aa)) lie on the Extracellular side of the membrane. The 252-residue stretch at 223 to 474 (NTCKLLVVAD…KAQECFQERS (252 aa)) folds into the Peptidase M12B domain. Intrachain disulfides connect cysteine 225–cysteine 333, cysteine 365–cysteine 469, and cysteine 423–cysteine 453. A glycan (N-linked (GlcNAc...) asparagine) is linked at asparagine 264. Zn(2+) is bound at residue histidine 405. The active site involves glutamate 406. The Zn(2+) site is built by histidine 409 and histidine 415. 4 N-linked (GlcNAc...) asparagine glycosylation sites follow: asparagine 452, asparagine 498, asparagine 539, and asparagine 551. Positions 475–563 (NKVCGNSRVD…ECPPPGDAED (89 aa)) constitute a Disintegrin domain. Intrachain disulfides connect cysteine 534/cysteine 555, cysteine 573/cysteine 582, cysteine 578/cysteine 591, and cysteine 593/cysteine 600. The tract at residues 603-671 (CCRNLSGPCV…NTFGKFLADN (69 aa)) is crambin-like. A glycan (N-linked (GlcNAc...) asparagine) is linked at asparagine 606. A helical transmembrane segment spans residues 672–692 (IVGSVLVFSLIFWIPFSILVH). The Cytoplasmic portion of the chain corresponds to 693–827 (CVDKKLDKQY…SRVDSKETEC (135 aa)). Positions 731–738 (PAPQTPGR) match the SH3-binding motif. Residue threonine 735 is modified to Phosphothreonine; by MAPK14. Threonine 764 bears the Phosphothreonine mark. The tract at residues 766 to 827 (QEDPSTDSHV…SRVDSKETEC (62 aa)) is disordered. The residue at position 770 (serine 770) is a Phosphoserine. Basic and acidic residues-rich tracts occupy residues 771–784 (TDSH…EKDP), 794–810 (SFED…EKAA), and 818–827 (SRVDSKETEC). A phosphoserine mark is found at serine 794 and serine 822.

Interacts with MAD2L1, MAPK14 and MUC1. Interacts with iRhom1/RHBDF1 and iRhom2/RHBDF2. Interacts with FRMD8 via its interaction with iRhom1/RHBDF1 and iRhom2/RHBDF2. Interacts with TSPAN8. Zn(2+) serves as cofactor. The precursor is cleaved by a furin endopeptidase. In terms of processing, phosphorylated. Stimulation by growth factor or phorbol 12-myristate 13-acetate induces phosphorylation of Ser-822 but decreases phosphorylation of Ser-794. Phosphorylation at Thr-735 by MAPK14 is required for ADAM17-mediated ectodomain shedding.

It is found in the membrane. It catalyses the reaction Narrow endopeptidase specificity. Cleaves Pro-Leu-Ala-Gln-Ala-|-Val-Arg-Ser-Ser-Ser in the membrane-bound, 26-kDa form of tumor necrosis factor alpha (TNFalpha). Similarly cleaves other membrane-anchored, cell-surface proteins to 'shed' the extracellular domains.. In terms of biological role, transmembrane metalloprotease which mediates the ectodomain shedding of a myriad of transmembrane proteins including adhesion proteins, growth factor precursors and cytokines important for inflammation and immunity. Cleaves the membrane-bound precursor of TNF-alpha to its mature soluble form. Responsible for the proteolytical release of soluble JAM3 from endothelial cells surface. Responsible for the proteolytic release of several other cell-surface proteins, including p75 TNF-receptor, interleukin 1 receptor type II, p55 TNF-receptor, transforming growth factor-alpha, L-selectin, growth hormone receptor, MUC1 and the amyloid precursor protein. Acts as an activator of Notch pathway by mediating cleavage of Notch, generating the membrane-associated intermediate fragment called Notch extracellular truncation (NEXT). Plays a role in the proteolytic processing of ACE2. Plays a role in hemostasis through shedding of GP1BA, the platelet glycoprotein Ib alpha chain. Mediates the proteolytic cleavage of LAG3, leading to release the secreted form of LAG3. Mediates the proteolytic cleavage of IL6R, leading to the release of secreted form of IL6R. Mediates the proteolytic cleavage and shedding of FCGR3A upon NK cell stimulation, a mechanism that allows for increased NK cell motility and detachment from opsonized target cells. Cleaves TREM2, resulting in shedding of the TREM2 ectodomain. In Rattus norvegicus (Rat), this protein is Disintegrin and metalloproteinase domain-containing protein 17 (Adam17).